The chain runs to 205 residues: Holliday junction branch migration complex subunit RuvA (205 aa).

Residues 1-64 form a domain I region; it reads MIGKLKGVVD…EDMIRLYGFR (64 aa). A domain II region spans residues 65–143; it reads SDAEREWFRL…AFAPVDPALI (79 aa). The tract at residues 144–152 is flexible linker; sequence RLAGAVEER. The tract at residues 153–205 is domain III; it reads TAPQPVADAISALVNLGYPQIQASAAVAAALQGAGEGAEAKTLIRLGLRELAR.

This sequence belongs to the RuvA family. As to quaternary structure, homotetramer. Forms an RuvA(8)-RuvB(12)-Holliday junction (HJ) complex. HJ DNA is sandwiched between 2 RuvA tetramers; dsDNA enters through RuvA and exits via RuvB. An RuvB hexamer assembles on each DNA strand where it exits the tetramer. Each RuvB hexamer is contacted by two RuvA subunits (via domain III) on 2 adjacent RuvB subunits; this complex drives branch migration. In the full resolvosome a probable DNA-RuvA(4)-RuvB(12)-RuvC(2) complex forms which resolves the HJ.

It localises to the cytoplasm. In terms of biological role, the RuvA-RuvB-RuvC complex processes Holliday junction (HJ) DNA during genetic recombination and DNA repair, while the RuvA-RuvB complex plays an important role in the rescue of blocked DNA replication forks via replication fork reversal (RFR). RuvA specifically binds to HJ cruciform DNA, conferring on it an open structure. The RuvB hexamer acts as an ATP-dependent pump, pulling dsDNA into and through the RuvAB complex. HJ branch migration allows RuvC to scan DNA until it finds its consensus sequence, where it cleaves and resolves the cruciform DNA. The protein is Holliday junction branch migration complex subunit RuvA of Methylobacterium nodulans (strain LMG 21967 / CNCM I-2342 / ORS 2060).